We begin with the raw amino-acid sequence, 226 residues long: Uracil-DNA glycosylase (226 aa).

Residue aspartate 64 is the Proton acceptor of the active site.

This sequence belongs to the uracil-DNA glycosylase (UDG) superfamily. UNG family.

The protein resides in the cytoplasm. It catalyses the reaction Hydrolyzes single-stranded DNA or mismatched double-stranded DNA and polynucleotides, releasing free uracil.. Functionally, excises uracil residues from the DNA which can arise as a result of misincorporation of dUMP residues by DNA polymerase or due to deamination of cytosine. This is Uracil-DNA glycosylase from Vibrio cholerae serotype O1 (strain ATCC 39541 / Classical Ogawa 395 / O395).